A 430-amino-acid polypeptide reads, in one-letter code: Glucose-6-phosphate isomerase (430 aa).

The Proton donor role is filled by Glu-284. Active-site residues include His-305 and Lys-420.

It belongs to the GPI family.

It localises to the cytoplasm. It catalyses the reaction alpha-D-glucose 6-phosphate = beta-D-fructose 6-phosphate. It functions in the pathway carbohydrate biosynthesis; gluconeogenesis. It participates in carbohydrate degradation; glycolysis; D-glyceraldehyde 3-phosphate and glycerone phosphate from D-glucose: step 2/4. Its function is as follows. Catalyzes the reversible isomerization of glucose-6-phosphate to fructose-6-phosphate. This Mycoplasma pneumoniae (strain ATCC 29342 / M129 / Subtype 1) (Mycoplasmoides pneumoniae) protein is Glucose-6-phosphate isomerase.